The following is a 154-amino-acid chain: UPF0225 protein YE2246 (154 aa).

It belongs to the UPF0225 family.

The sequence is that of UPF0225 protein YE2246 from Yersinia enterocolitica serotype O:8 / biotype 1B (strain NCTC 13174 / 8081).